Reading from the N-terminus, the 462-residue chain is Cytochrome P450 20A1 (462 aa).

Residues 4–24 traverse the membrane as a helical segment; sequence FAIFAVTFLLALVGAVLYLYP. Residue Cys-409 participates in heme binding.

Belongs to the cytochrome P450 family. Requires heme as cofactor.

Its subcellular location is the membrane. The sequence is that of Cytochrome P450 20A1 (Cyp20a1) from Rattus norvegicus (Rat).